Here is a 368-residue protein sequence, read N- to C-terminus: MTPNKPWDDKKEMITTALESGISYVLDLDDYDKIQKLGNVKIVANSDDADIYLVGINGEGDGSLILSEDLNQSQDLQEAKKAKREGKTVCAYVEITDKNHEQLAVSLGSVADYIILISTDWTVIPLENIIADLQKADVKIIAAVADEDGAKLAIETLEHGTDGVIFEANDFNQIKKIAQLVVDASKIKYDLKVATVTNVKPLGSGDRVCVDTTDMMKPGEGMLIGSYSKSLFLVHSESLESEYVASRPFRVNAGPVQAYVMVPGNKTRYLSELVAGDEVLIVNTEGETRTAYVGRSKIERRPLILIEAEYEGKTIRTLLQNAETIRIVDADNNPLSVADIKIGDKVKVYVESNARHFGIAIDETIIEQ.

This sequence belongs to the archaeal-type DHQ synthase family.

The catalysed reaction is 2-amino-2,3,7-trideoxy-D-lyxo-hept-6-ulosonate + NAD(+) + H2O = 3-dehydroquinate + NH4(+) + NADH + H(+). Functionally, catalyzes the oxidative deamination and cyclization of 2-amino-3,7-dideoxy-D-threo-hept-6-ulosonic acid (ADH) to yield 3-dehydroquinate (DHQ), which is fed into the canonical shikimic pathway of aromatic amino acid biosynthesis. This is 3-dehydroquinate synthase from Methanobrevibacter smithii (strain ATCC 35061 / DSM 861 / OCM 144 / PS).